The chain runs to 193 residues: Holliday junction branch migration complex subunit RuvA (193 aa).

The segment at 1 to 64 is domain I; sequence MIGRIAGVLL…EDAHLLYGFL (64 aa). Residues 65 to 139 form a domain II region; the sequence is TPQERSTFRE…GKLGADLGAM (75 aa). The tract at residues 139-143 is flexible linker; that stretch reads MAGAA. The domain III stretch occupies residues 144–193; that stretch reads SQSDHASDILNALLALGYSEKEGLAAIKNVPAGTGVSEGIKLALKALSKA.

This sequence belongs to the RuvA family. In terms of assembly, homotetramer. Forms an RuvA(8)-RuvB(12)-Holliday junction (HJ) complex. HJ DNA is sandwiched between 2 RuvA tetramers; dsDNA enters through RuvA and exits via RuvB. An RuvB hexamer assembles on each DNA strand where it exits the tetramer. Each RuvB hexamer is contacted by two RuvA subunits (via domain III) on 2 adjacent RuvB subunits; this complex drives branch migration. In the full resolvosome a probable DNA-RuvA(4)-RuvB(12)-RuvC(2) complex forms which resolves the HJ.

The protein localises to the cytoplasm. Functionally, the RuvA-RuvB-RuvC complex processes Holliday junction (HJ) DNA during genetic recombination and DNA repair, while the RuvA-RuvB complex plays an important role in the rescue of blocked DNA replication forks via replication fork reversal (RFR). RuvA specifically binds to HJ cruciform DNA, conferring on it an open structure. The RuvB hexamer acts as an ATP-dependent pump, pulling dsDNA into and through the RuvAB complex. HJ branch migration allows RuvC to scan DNA until it finds its consensus sequence, where it cleaves and resolves the cruciform DNA. The polypeptide is Holliday junction branch migration complex subunit RuvA (Paraburkholderia phymatum (strain DSM 17167 / CIP 108236 / LMG 21445 / STM815) (Burkholderia phymatum)).